A 496-amino-acid polypeptide reads, in one-letter code: FAD-linked oxidoreductase AFUA_1G00980 (496 aa).

An N-terminal signal peptide occupies residues 1–21 (MRRATLIPLAIWVAGAAAAAA). N-linked (GlcNAc...) asparagine glycans are attached at residues asparagine 49, asparagine 122, asparagine 205, asparagine 258, asparagine 344, asparagine 351, asparagine 371, and asparagine 382. The FAD-binding PCMH-type domain maps to 64-243 (MAPTYAVSVR…VEAVYQVTDL (180 aa)).

This sequence belongs to the oxygen-dependent FAD-linked oxidoreductase family. It depends on FAD as a cofactor.

In terms of biological role, FAD-linked oxidoreductase; part of the gene cluster that mediates the biosynthesis of fumigermin that inhibits germination of spores of the inducing S.rapamycinicus, and thus helps the fungus to defend resources in the shared habitat against a bacterial competitor. The partially reducing polyketide synthase fngA alone is sufficient for the production of fumigermin. FgnA catalyzes the condensation of 3 malonyl-CoA units to an acetyl-CoA starter, and 3 methylations to yield fumigermin. It is remarkable that the five cluster genes including fgnA are conserved in distantly related fungi, supporting the assumption of a fumigermin cluster; it is thus possible that originally all five genes were functional, but that the genes encoding tailoring enzymes became inactive from mutations, similar to the case of the fgnA gene in strains A1163 and Af293. This is FAD-linked oxidoreductase AFUA_1G00980 from Aspergillus fumigatus (strain ATCC MYA-4609 / CBS 101355 / FGSC A1100 / Af293) (Neosartorya fumigata).